The chain runs to 58 residues: Large ribosomal subunit protein uL30 (58 aa).

This sequence belongs to the universal ribosomal protein uL30 family. As to quaternary structure, part of the 50S ribosomal subunit.

The chain is Large ribosomal subunit protein uL30 from Desulfovibrio desulfuricans (strain ATCC 27774 / DSM 6949 / MB).